The following is a 31-amino-acid chain: Cytochrome b6-f complex subunit 6 (31 aa).

Residues 4 to 24 (IISYFGLLLATLTFTIVLFVG) form a helical membrane-spanning segment.

The protein belongs to the PetL family. The 4 large subunits of the cytochrome b6-f complex are cytochrome b6, subunit IV (17 kDa polypeptide, PetD), cytochrome f and the Rieske protein, while the 4 small subunits are PetG, PetL, PetM and PetN. The complex functions as a dimer.

It is found in the plastid. The protein localises to the chloroplast thylakoid membrane. In terms of biological role, component of the cytochrome b6-f complex, which mediates electron transfer between photosystem II (PSII) and photosystem I (PSI), cyclic electron flow around PSI, and state transitions. PetL is important for photoautotrophic growth as well as for electron transfer efficiency and stability of the cytochrome b6-f complex. This chain is Cytochrome b6-f complex subunit 6, found in Staurastrum punctulatum (Green alga).